Consider the following 368-residue polypeptide: Phospho-N-acetylmuramoyl-pentapeptide-transferase (368 aa).

9 helical membrane-spanning segments follow: residues 50 to 70, 95 to 115, 117 to 137, 156 to 176, 183 to 203, 218 to 238, 242 to 262, 284 to 304, and 347 to 367; these read LLAL…VVPL, PTMG…ILAG, SPLV…GWLD, LCLQ…QQGW, ITLP…LAVF, LDGL…LWLA, PAIA…LLHN, AIAI…LFVL, and TQVV…CWLL.

Belongs to the glycosyltransferase 4 family. MraY subfamily. It depends on Mg(2+) as a cofactor.

It localises to the cell inner membrane. The enzyme catalyses UDP-N-acetyl-alpha-D-muramoyl-L-alanyl-gamma-D-glutamyl-meso-2,6-diaminopimeloyl-D-alanyl-D-alanine + di-trans,octa-cis-undecaprenyl phosphate = di-trans,octa-cis-undecaprenyl diphospho-N-acetyl-alpha-D-muramoyl-L-alanyl-D-glutamyl-meso-2,6-diaminopimeloyl-D-alanyl-D-alanine + UMP. It participates in cell wall biogenesis; peptidoglycan biosynthesis. Catalyzes the initial step of the lipid cycle reactions in the biosynthesis of the cell wall peptidoglycan: transfers peptidoglycan precursor phospho-MurNAc-pentapeptide from UDP-MurNAc-pentapeptide onto the lipid carrier undecaprenyl phosphate, yielding undecaprenyl-pyrophosphoryl-MurNAc-pentapeptide, known as lipid I. This Synechococcus sp. (strain ATCC 27144 / PCC 6301 / SAUG 1402/1) (Anacystis nidulans) protein is Phospho-N-acetylmuramoyl-pentapeptide-transferase.